The primary structure comprises 246 residues: tRNA pseudouridine synthase B (246 aa).

The Nucleophile role is filled by aspartate 44.

The protein belongs to the pseudouridine synthase TruB family. Type 1 subfamily.

It carries out the reaction uridine(55) in tRNA = pseudouridine(55) in tRNA. Responsible for synthesis of pseudouridine from uracil-55 in the psi GC loop of transfer RNAs. The protein is tRNA pseudouridine synthase B of Desulfotalea psychrophila (strain LSv54 / DSM 12343).